Reading from the N-terminus, the 324-residue chain is Probable cell division protein WhiA (324 aa).

Positions 276 to 310 (TLKELGEMMQGGKVSKSGINHRLRKIDEFADKLRN) form a DNA-binding region, H-T-H motif.

It belongs to the WhiA family.

Functionally, involved in cell division and chromosome segregation. The sequence is that of Probable cell division protein WhiA from Shouchella clausii (strain KSM-K16) (Alkalihalobacillus clausii).